The sequence spans 157 residues: Transcriptional repressor NrdR (157 aa).

Residues 1–21 (MKCPHCGNNGSRVVDSRPTDE) form a disordered region. Residues 3-34 (CPHCGNNGSRVVDSRPTDEGRVIRRRRECEKC) fold into a zinc finger. The ATP-cone domain occupies 49–139 (LLVIKKNGSR…VYRQFKDMHV (91 aa)).

Belongs to the NrdR family. It depends on Zn(2+) as a cofactor.

Negatively regulates transcription of bacterial ribonucleotide reductase nrd genes and operons by binding to NrdR-boxes. The chain is Transcriptional repressor NrdR from Pediococcus pentosaceus (strain ATCC 25745 / CCUG 21536 / LMG 10740 / 183-1w).